The primary structure comprises 1114 residues: MTDVNPVRSDNCRQYNNVPPQIDLPAMDHEIIDLWARQHTFDKSLEATKDGQPWTFFEGPPTANGQPGTHHVEARVFKDIFPRFKTMQGFRVDRKAGWDCHGLPVELAVEKELGFSGKPDIEKYGVEPFNAKCRESVTRHVDAFSELTERMGYWVNMDEAYWTMSPSYVESVWWGLKRIWDKGLLGEDHRVAPYCPRCGTTLSDHELAQGYQDDRDPSIYVRFPVTSGPLAGRAKLLVWTTTPWTLVSNTAVAVHPEVRYVVAHRDPVPEGSDAVATASAEDPASQDLIIAEPLFEKVLGEGWSLTGESFLGSQMELWTYERPYNFLEWPKTERVTVDGRPTPADANFVVLADYVTVEDGTGLVHQAPAFGADDLQTCRRYGLPLVNPIRPDGTFEESVPLVGGQFFKTADKPLCEDLDRRGVLFRLEMHWHSYPHCWRCDTHLIYYAQPSWYIRTTKVKEQLLAQNEVTTWYPETIKHGRFGDWLENNIDWAVSRSRYWGTPLPLWRNDDDRSDVICVESLAELSQYVGRDLTGMDPHRPFIDEVTFTRDGHTYHRVPEVADAWLDSGSMPFAQWGYPHVPGSKEKFESHYPGDFICEAIDQTRGWFYTMMAVGTLVFDESSYRNVLCLGHILAEDGRKMSKHLGNILLPIPLMDSHGADALRWFMAADGSPWSARRVGDETIQETVRKVLLTYWNTVSFQVLYARANGWSPAQGTQHDADPARGFGGVVPPAVGSRGFGGVVPPAVTERHVLDRWLVSATNVLVRDVTEALNNFDTQRVGNLIAQFVDELSNWYVRRSRRRFWDGDEGALWTLHETLETLTKLMAPMVPFITERVWQDLFVTTNPHGPESVHLASWPVADDSLIDESLSESMDLARRIVELGRGARAEAKAKIRQPLSRALISGAALAKLDEDLQAEIRSELNVMALDSFTAAGDLVDHCAKGNFRALGKKYAKATPKVAAAIAAADPEWLASELAIKGSVEMDVPEVEGGKAVVTADDVIVSERPREGWSVVNEQGETVALDLEITPELARAGQAREVIRFVQDSRKKAGLDVSDRITLAWSASADLATAIEEHAEQISQEVLAVQMSREPRADDWAVEPDLGLAVKVVKV.

Positions 61 to 71 (PTANGQPGTHH) match the 'HIGH' region motif. Residues 640 to 644 (KMSKH) carry the 'KMSKS' region motif. Residue Lys-643 participates in ATP binding.

The protein belongs to the class-I aminoacyl-tRNA synthetase family. IleS type 2 subfamily. Monomer. It depends on Zn(2+) as a cofactor.

It is found in the cytoplasm. The catalysed reaction is tRNA(Ile) + L-isoleucine + ATP = L-isoleucyl-tRNA(Ile) + AMP + diphosphate. Functionally, catalyzes the attachment of isoleucine to tRNA(Ile). As IleRS can inadvertently accommodate and process structurally similar amino acids such as valine, to avoid such errors it has two additional distinct tRNA(Ile)-dependent editing activities. One activity is designated as 'pretransfer' editing and involves the hydrolysis of activated Val-AMP. The other activity is designated 'posttransfer' editing and involves deacylation of mischarged Val-tRNA(Ile). In Cutibacterium acnes (strain DSM 16379 / KPA171202) (Propionibacterium acnes), this protein is Isoleucine--tRNA ligase.